Reading from the N-terminus, the 780-residue chain is MAIAYNLGKGEYKNWIISETEFNENNLPKFETIFSLGNGYMGLRAATEEHYFNETRGCYVAGMFDRFKGEVAELPNIPDYVGMEIKLDGERFNLNQGKIISYHRYLNVKDGELVREVEWQSPAGNITKLVFKRFVSLANLHLAGFKIKIIPVNYSGKVAIKTGYNGQVTNSGVQHFVEGDKRVLPDGKSYLTVRTQESGIFTIVAGKFRFLINASEINPQQQIVTGRRQLFLRSEYELKENECLEMEKCVIVYTGRDLEFKDKDIDSGDIVETALTTLDKAGTKRYEELFSEHRQKWHKLWHEIDIEIGGPDFDQLAVRFAQYHLVQMTPSHDSRISVAAKGLSGEGYKGHVFWDTEIFILPFFIYTFPQIARKLLEYRYHTLDGARKKARENGYKGAMYPWESADTGEETTPEFGEVDIKTGKPIRIWCGEIEQHITADVAYAIWHYYQVTGDKEFMYNYGTEIFMETARFWASRLEYNQGLDRYEIKDVIGPDEYSEHVNNNAYTNYMVKWHLEKAIDIYNWLSDDSRDILEKIINKIALKEDELNEWKKKKDKIYLPFQEDSKVIPQFDGFMDQDVIDISSYRGDVGAIMKAYSWDEITSSQVIKQADVVMLLYLLGEDFSHEVKEKNYHYYEPKTLHDSSLSPSIHAIMGKEIGDLDEAYRYFNKSTTIDLGRNMRSCDAGLHSASLGGIWQAVVLGFGGVKVKDNVLNIDPMLPEKWDYLNFKLKWQGMPIRVEIRNDRVSVSFLNDDKAMLKDVSVMVKGRNLQLNNNKAVVNL.

354-355 serves as a coordination point for substrate; sequence WD. Glutamate 496 acts as the Proton donor in catalysis. 608–609 is a binding site for substrate; the sequence is KQ.

Belongs to the glycosyl hydrolase 65 family.

It carries out the reaction kojibiose + phosphate = beta-D-glucose 1-phosphate + D-glucose. Functionally, catalyzes the reversible phosphorolysis of kojibiose into beta-D-glucose 1-phosphate (Glc1P) and D-glucose. In the reverse direction, uses Glc1P as acceptor to produce alpha-1,2-glucans up to a degree of polymerization of 6. The chain is Kojibiose phosphorylase from Halothermothrix orenii (strain H 168 / OCM 544 / DSM 9562).